Consider the following 122-residue polypeptide: Fluoride-specific ion channel FluC (122 aa).

The next 4 membrane-spanning stretches (helical) occupy residues 6 to 26, 33 to 53, 60 to 80, and 101 to 121; these read LVVGFGGFIGAILRMLSINLV, SISFGTLFVNVLGSFIIGLLF, GLSPLLKSFISTGFLGAFTTF, and LNIILNVFLCLFAAWLGFLIF. Glycine 75 and threonine 78 together coordinate Na(+).

This sequence belongs to the fluoride channel Fluc/FEX (TC 1.A.43) family.

The protein resides in the cell inner membrane. It carries out the reaction fluoride(in) = fluoride(out). Na(+) is not transported, but it plays an essential structural role and its presence is essential for fluoride channel function. Functionally, fluoride-specific ion channel. Important for reducing fluoride concentration in the cell, thus reducing its toxicity. The chain is Fluoride-specific ion channel FluC from Campylobacter jejuni subsp. jejuni serotype O:2 (strain ATCC 700819 / NCTC 11168).